We begin with the raw amino-acid sequence, 368 residues long: tRNA(Met) cytidine acetate ligase (368 aa).

Residues 7-20, G96, N152, and R175 each bind ATP; that span reads IAEF…HKYL.

Belongs to the TmcAL family.

It is found in the cytoplasm. The catalysed reaction is cytidine(34) in elongator tRNA(Met) + acetate + ATP = N(4)-acetylcytidine(34) in elongator tRNA(Met) + AMP + diphosphate. Its function is as follows. Catalyzes the formation of N(4)-acetylcytidine (ac(4)C) at the wobble position of elongator tRNA(Met), using acetate and ATP as substrates. First activates an acetate ion to form acetyladenylate (Ac-AMP) and then transfers the acetyl group to tRNA to form ac(4)C34. The sequence is that of tRNA(Met) cytidine acetate ligase from Streptococcus pyogenes serotype M1.